A 921-amino-acid chain; its full sequence is Dual serine/threonine and tyrosine protein kinase (921 aa).

The Protein kinase domain maps to 645–899 (PKLGRELGRG…PLLGIVEPSL (255 aa)). Residues 651–659 (LGRGQYGVV) and K674 contribute to the ATP site. Residue D770 is the Proton acceptor of the active site.

This sequence belongs to the protein kinase superfamily. Ser/Thr protein kinase family.

It localises to the cytoplasm. The protein resides in the cell membrane. The protein localises to the apical cell membrane. It is found in the basolateral cell membrane. Its subcellular location is the cell junction. It catalyses the reaction L-seryl-[protein] + ATP = O-phospho-L-seryl-[protein] + ADP + H(+). The enzyme catalyses L-threonyl-[protein] + ATP = O-phospho-L-threonyl-[protein] + ADP + H(+). It carries out the reaction L-tyrosyl-[protein] + ATP = O-phospho-L-tyrosyl-[protein] + ADP + H(+). May act as a positive regulator of ERK phosphorylation downstream of fibroblast growth factor-receptor activation. May induce both caspase-dependent apoptosis and caspase-independent cell death. May play a role in the embryonic development. The sequence is that of Dual serine/threonine and tyrosine protein kinase (dstyk) from Takifugu rubripes (Japanese pufferfish).